We begin with the raw amino-acid sequence, 571 residues long: Proline--tRNA ligase (571 aa).

It belongs to the class-II aminoacyl-tRNA synthetase family. ProS type 1 subfamily. As to quaternary structure, homodimer.

Its subcellular location is the cytoplasm. The enzyme catalyses tRNA(Pro) + L-proline + ATP = L-prolyl-tRNA(Pro) + AMP + diphosphate. Catalyzes the attachment of proline to tRNA(Pro) in a two-step reaction: proline is first activated by ATP to form Pro-AMP and then transferred to the acceptor end of tRNA(Pro). As ProRS can inadvertently accommodate and process non-cognate amino acids such as alanine and cysteine, to avoid such errors it has two additional distinct editing activities against alanine. One activity is designated as 'pretransfer' editing and involves the tRNA(Pro)-independent hydrolysis of activated Ala-AMP. The other activity is designated 'posttransfer' editing and involves deacylation of mischarged Ala-tRNA(Pro). The misacylated Cys-tRNA(Pro) is not edited by ProRS. The sequence is that of Proline--tRNA ligase from Aliivibrio salmonicida (strain LFI1238) (Vibrio salmonicida (strain LFI1238)).